Consider the following 198-residue polypeptide: RNA 2',3'-cyclic phosphodiesterase (198 aa).

H39 (proton donor) is an active-site residue. Short sequence motifs (HXTX) lie at residues 39–42 and 130–133; these read HLTL and HITL. H130 functions as the Proton acceptor in the catalytic mechanism.

Belongs to the 2H phosphoesterase superfamily. ThpR family.

It carries out the reaction a 3'-end 2',3'-cyclophospho-ribonucleotide-RNA + H2O = a 3'-end 2'-phospho-ribonucleotide-RNA + H(+). Hydrolyzes RNA 2',3'-cyclic phosphodiester to an RNA 2'-phosphomonoester. In Thermus thermophilus (strain ATCC 27634 / DSM 579 / HB8), this protein is RNA 2',3'-cyclic phosphodiesterase.